Consider the following 547-residue polypeptide: Chaperonin GroEL (547 aa).

ATP is bound by residues 29–32, Lys50, 86–90, Gly414, 478–480, and Asp494; these read TLGP, DGTTT, and NAA.

Belongs to the chaperonin (HSP60) family. As to quaternary structure, forms a cylinder of 14 subunits composed of two heptameric rings stacked back-to-back. Interacts with the co-chaperonin GroES.

The protein localises to the cytoplasm. It catalyses the reaction ATP + H2O + a folded polypeptide = ADP + phosphate + an unfolded polypeptide.. Functionally, together with its co-chaperonin GroES, plays an essential role in assisting protein folding. The GroEL-GroES system forms a nano-cage that allows encapsulation of the non-native substrate proteins and provides a physical environment optimized to promote and accelerate protein folding. This Saccharophagus degradans (strain 2-40 / ATCC 43961 / DSM 17024) protein is Chaperonin GroEL.